Consider the following 824-residue polypeptide: Lysine-specific histone demethylase 1B homolog (824 aa).

Residues 1–31 (MTTELEIDDRKEEEAQIPGETSESEEGDEPV) are disordered. Positions 245 to 346 (PFTDVIANIV…YGAFDFRIDP (102 aa)) constitute an SWIRM domain. FAD contacts are provided by residues 352-407 (PKIA…AQII), valine 579, glutamate 788, and 796-798 (QTM).

The protein belongs to the flavin monoamine oxidase family. FAD serves as cofactor. As to expression, in hermaphrodites, expressed in gut cells, embryonic cells and sheath cells. Not expressed in sperm or pharyngeal neurons.

It localises to the nucleus. It catalyses the reaction N(6),N(6)-dimethyl-L-lysyl(4)-[histone H3] + 2 A + 2 H2O = L-lysyl(4)-[histone H3] + 2 formaldehyde + 2 AH2. Functionally, histone demethylase that demethylates di-methylated 'Lys-4' of histone H3, a specific tag for epigenetic transcriptional activation, thereby acting as a corepressor. Acts by oxidizing the substrate by FAD to generate the corresponding imine that is subsequently hydrolyzed. Plays a role in the mitotic development of the germline. May be involved in H3 demethylation in mitotic cells including gut and embryonic cells. Plays a role in sensitivity upon interstrand cross-link DNA damage, probably by positively regulating the expression of mlh-1. Plays a role in developmental growth and lifespan regulation in response to ultraviolet-induced damage. No obvious role in larval development, sex chromosome segregation or for regulating meiotic crossover frequency. The chain is Lysine-specific histone demethylase 1B homolog from Caenorhabditis elegans.